Reading from the N-terminus, the 35-residue chain is Natriuretic peptide TNPb (35 aa).

A disulfide bond links C9 and C25.

Expressed by the venom gland.

Its subcellular location is the secreted. Its function is as follows. Snake venom natriuretic peptide that exhibits vasoactive and probable hypotensive activity. Is only weakly active on natriuretic peptide receptor-C (NPR3). Stimulates cGMP production through the natriuretic peptide receptor 1 (NPR1) with moderate potencies for the rat NPR1 (EC(50)=1200 nM), and very weak potencies over human NPR1 (30% activation at 10 uM). In vivo, does not impact systolic and diastolic blood pressure, as well as heart rate, when intravenously injected in conscious rabbits. Does not affect the bradycardia due to cardiac afferent stimulation (Bezold-Jarisch reflex). The polypeptide is Natriuretic peptide TNPb (Oxyuranus microlepidotus (Inland taipan)).